Consider the following 170-residue polypeptide: Transcription factor E (170 aa).

An HTH TFE/IIEalpha-type domain is found at 1 to 93 (MKDVYLYIVE…TWYVNDEVIS (93 aa)).

Belongs to the TFE family. In terms of assembly, monomer. Interaction with RNA polymerase subunits RpoF and RpoE is necessary for Tfe stimulatory transcription activity. Able to interact with Tbp and RNA polymerase in the absence of DNA promoter. Interacts both with the preinitiation and elongation complexes.

Functionally, transcription factor that plays a role in the activation of archaeal genes transcribed by RNA polymerase. Facilitates transcription initiation by enhancing TATA-box recognition by TATA-box-binding protein (Tbp), and transcription factor B (Tfb) and RNA polymerase recruitment. Not absolutely required for transcription in vitro, but particularly important in cases where Tbp or Tfb function is not optimal. It dynamically alters the nucleic acid-binding properties of RNA polymerases by stabilizing the initiation complex and destabilizing elongation complexes. Seems to translocate with the RNA polymerase following initiation and acts by binding to the non template strand of the transcription bubble in elongation complexes. The chain is Transcription factor E from Pyrobaculum calidifontis (strain DSM 21063 / JCM 11548 / VA1).